Reading from the N-terminus, the 505-residue chain is Bifunctional pantoate ligase/cytidylate kinase (505 aa).

The segment at 1–268 (MHQWRKHQQS…CGETRLIDHT (268 aa)) is pantoate--beta-alanine ligase. Residue 18–25 (MGALHRGH) coordinates ATP. The active-site Proton donor is the H25. Q53 provides a ligand contact to (R)-pantoate. Q53 provides a ligand contact to beta-alanine. 142-145 (GEKD) is a binding site for ATP. (R)-pantoate is bound at residue Q148. ATP-binding positions include V171 and 179–182 (CSSR). A cytidylate kinase region spans residues 269–505 (FLMSRQPIVA…PEEVWPTAGR (237 aa)).

This sequence in the N-terminal section; belongs to the pantothenate synthetase family. The protein in the C-terminal section; belongs to the cytidylate kinase family. Type 1 subfamily.

The protein resides in the cytoplasm. It carries out the reaction (R)-pantoate + beta-alanine + ATP = (R)-pantothenate + AMP + diphosphate + H(+). It catalyses the reaction CMP + ATP = CDP + ADP. The enzyme catalyses dCMP + ATP = dCDP + ADP. Its pathway is cofactor biosynthesis; (R)-pantothenate biosynthesis; (R)-pantothenate from (R)-pantoate and beta-alanine: step 1/1. Catalyzes the condensation of pantoate with beta-alanine in an ATP-dependent reaction via a pantoyl-adenylate intermediate. Its function is as follows. Catalyzes the transfer of a phosphate group from ATP to either CMP or dCMP to form CDP or dCDP and ADP, respectively. This chain is Bifunctional pantoate ligase/cytidylate kinase, found in Prochlorococcus marinus (strain MIT 9313).